A 1211-amino-acid chain; its full sequence is Transient receptor potential cation channel subfamily A member 1 homolog (1211 aa).

Residues 1-811 (MSKKSLGLDV…LKYKWNRLGR (811 aa)) are Cytoplasmic-facing. ANK repeat units lie at residues 49 to 79 (NLRS…AVNA), 83 to 112 (DFMT…LPNT), 116 to 169 (EGDT…EIDP), 173 to 202 (YQLT…DVDA), 206 to 235 (NKMT…NVTK), 239 to 270 (RLNT…AIKA), 277 to 306 (EKKT…KNSC), 311 to 340 (REKE…NKNE), 344 to 374 (VKAV…NIDV), 378 to 407 (QGLT…NLTI), 411 to 440 (DERT…KKNK), 473 to 502 (DQNT…SITQ), 506 to 535 (DEET…RLLL), 540 to 569 (MGNS…DKEA), 573 to 602 (YQKT…QIES), 605 to 634 (DTKT…TIDR), and 638 to 669 (EGKT…NLMI). Residues 812–832 (PMYYFALFMYLVFIVSLTQYV) form a helical membrane-spanning segment. Residues 833 to 870 (RHTKAPYNVWNEESYYDSEYFDENETCPQINTTKPDVV) lie on the Extracellular side of the membrane. Asn856 and Asn863 each carry an N-linked (GlcNAc...) asparagine glycan. The chain crosses the membrane as a helical span at residues 871–891 (WKIIIQTLAVCQILVECFQLF). The Cytoplasmic segment spans residues 892-894 (QRK). The helical transmembrane segment at 895-915 (FAYLVNWENWIDCFIYSTALI) threads the bilayer. At 916-932 (TVYDFSECSATSGVRQN) the chain is on the extracellular side. The helical transmembrane segment at 933–953 (WQWILAALCIFFGWINLLFMI) threads the bilayer. At 954-975 (RKMPRFGIFVVMFVDIVKTFFR) the chain is on the cytoplasmic side. Residues 976–996 (FFPVFVLFIIAFSSSFYVILQ) traverse the membrane as a helical segment. At 997 to 1004 (NRPEFSTI) the chain is on the extracellular side. The pore-forming intramembrane region spans 1005-1025 (FMSPLKTTVMMIGEFEFTGIF). Topologically, residues 1026–1048 (HGDETTHAEKMFGPAHTAVACAL) are extracellular. Residues 1049–1069 (FFFFCIIMTILLMNLLVGLAV) form a helical membrane-spanning segment. The Cytoplasmic segment spans residues 1070–1193 (DDIKGVQEKA…EKQVRLEAII (124 aa)). A coiled-coil region spans residues 1149–1191 (EMYEREAEFTSEMTQKLQNQAAKLKNIQENIDVMYEKQVRLEA).

This sequence belongs to the transient receptor (TC 1.A.4) family. In terms of assembly, homotetramer. In terms of tissue distribution, expressed in many sensory neurons, including OLQ and IL1 neurons.

The protein localises to the cell membrane. Functionally, receptor-activated non-selective cation channel involved in the nose-touch response and foraging behavior. Contributes to the neural responses of sensory neurons to touch, particularly after repeated mechanical stimulation. Has no apparent role in thermosensory or chemosensory behaviors. In Caenorhabditis elegans, this protein is Transient receptor potential cation channel subfamily A member 1 homolog (trpa-1).